The following is a 695-amino-acid chain: RING finger protein 145 (695 aa).

13 consecutive transmembrane segments (helical) span residues 53 to 73 (YLAL…LTLP), 77 to 97 (LAKL…HQIS), 123 to 143 (FITA…VMKT), 146 to 166 (IWLF…VPIE), 168 to 188 (IVVI…YFLA), 225 to 245 (LVVP…QIYT), 275 to 295 (YSLL…LTLC), 316 to 336 (TEGV…LQVV), 340 to 360 (FLLS…MLEI), 384 to 404 (SLCL…CQFF), 410 to 430 (LLII…TLFI), 460 to 480 (LLEF…TVFG), and 482 to 502 (WTVM…WLRA). An RING-type; atypical zinc finger spans residues 537 to 575 (CSICYQDMNSAVITPCSHFFHPGCLKKWLYVQETCPLCH). The span at 585 to 603 (ATGESGSSTNPVSEQSATN) shows a compositional bias: polar residues. Residues 585 to 610 (ATGESGSSTNPVSEQSATNPPLGPVS) are disordered.

The protein localises to the membrane. The polypeptide is RING finger protein 145 (rnf145) (Xenopus tropicalis (Western clawed frog)).